A 1362-amino-acid chain; its full sequence is DNA-directed RNA polymerase subunit beta (1362 aa).

It belongs to the RNA polymerase beta chain family. In terms of assembly, the RNAP catalytic core consists of 2 alpha, 1 beta, 1 beta' and 1 omega subunit. When a sigma factor is associated with the core the holoenzyme is formed, which can initiate transcription.

The enzyme catalyses RNA(n) + a ribonucleoside 5'-triphosphate = RNA(n+1) + diphosphate. Its function is as follows. DNA-dependent RNA polymerase catalyzes the transcription of DNA into RNA using the four ribonucleoside triphosphates as substrates. The chain is DNA-directed RNA polymerase subunit beta from Acinetobacter baumannii (strain AB307-0294).